Reading from the N-terminus, the 244-residue chain is uncharacterized protein (244 aa).

The first 18 residues, 1–18, serve as a signal peptide directing secretion; the sequence is MQFSVLCKFLLLVTAVMA. Residues 19-223 are Lumenal-facing; that stretch reads QTEYTPGFTT…TTIPSSAVHY (205 aa). Composition is skewed to low complexity over residues 55–65 and 75–128; these read ETSTHSVTSTN and TSHN…TTHV. The tract at residues 55-128 is disordered; sequence ETSTHSVTST…TTVVPPTTHV (74 aa). A helical transmembrane segment spans residues 224–244; the sequence is ASPSGLLALVVMLISAFAFLA.

It localises to the endoplasmic reticulum membrane. This is an uncharacterized protein from Schizosaccharomyces pombe (strain 972 / ATCC 24843) (Fission yeast).